Here is a 237-residue protein sequence, read N- to C-terminus: Protein UL24 homolog (237 aa).

The protein belongs to the herpesviridae UL24 family.

The chain is Protein UL24 homolog (20) from Equus caballus (Horse).